The sequence spans 1129 residues: Protein LANA1 (1129 aa).

Disordered regions lie at residues 1-988 (MAPP…PVPY) and 1110-1129 (LPLT…QEMT). Basic and acidic residues-rich tracts occupy residues 28–41 (RSPE…DLHL) and 48–58 (VADSVDGRECG). The span at 85-104 (PVAPIPSPAPATPLPPPALL) shows a compositional bias: pro residues. Over residues 139-156 (SPESSQRPPLSSPTGRPD) the composition is skewed to polar residues. Residues 161–185 (MRPPPSQQTTPPHSPTTPPPEPPSK) are compositionally biased toward pro residues. A compositionally biased stretch (low complexity) spans 186 to 197 (SSPDSLAPSTLR). Polar residues predominate over residues 207 to 217 (PQGPSTLNPIC). The span at 263-275 (PISIGSSSPSEGS) shows a compositional bias: low complexity. Basic and acidic residues-rich tracts occupy residues 292 to 301 (EASKNEKECS) and 314 to 323 (EISKESQVDK). Over residues 324-419 (DDNDNKDDEE…DKKEDEEDGG (96 aa)) the composition is skewed to acidic residues. Positions 431 to 471 (QQQQEPQQQEPQQQEPQQQEPQQQEPQQQEPQQQEPQQQEP) are enriched in low complexity. Basic and acidic residues predominate over residues 472–528 (QQREPQQREPQQREPQQREPQQREPQQREPQQREPQQREPQQREPQQREPQQREPQQ). The segment covering 529–596 (REPQQQEPQQ…QQQEPQQQDE (68 aa)) has biased composition (low complexity). The span at 597–888 (QQQDEQQQDE…QELEEVEEQE (292 aa)) shows a compositional bias: acidic residues. Positions 924 to 934 (THEQIASSPPG) are enriched in polar residues. Over residues 962–979 (PGVRMRRVPVTHPKKPHP) the composition is skewed to basic residues. Positions 1008–1129 (FLGKDGRRDP…GPGDSPQEMT (122 aa)) are DNA-binding domain.

Homooligomer. Interacts with host BRD2. Interacts with host RELA, ELOB, ELOC and CUL5; these interactions induce the proteasomal degradation of host RELA. Interacts with host TRIM28 and NFE2L2/NRF2; these interactions are essential for the shutdown of lytic gene expression during the early stage of infection. Interacts (via N-terminus) with host histones H2A and H2B; these interactions are essential to dock LANA1 onto chromosomes. Interacts with host BUB1 and PCNA. Interacts with host NAP1L1; this interaction is required for LANA1-dependent DNA replication. Interacts with components of the host MLL1 complex KMT2A and WDR5.

It is found in the host nucleus. Functionally, multifunctional protein that plays a role in the replication and long-term persistence of the viral episomal genome in dividing cells. Binds to mitotic chromosomes via its N-terminal region and to a 16-bp imperfect palindrome within the origin of replication (oriP) located in the viral terminal repeat (TR) through its C-terminal. Tethers viral episomes to chromosomes during mitosis. Plays a critical role in the shutdown of lytic gene expression during the early stage of infection by interacting with host TRIM28. Also plays a role in the repression of host NF-kappa-B activity upon TNF-alpha stimulation by promoting the proteasomal degradation of host RELA. Promotes nuclear localization and cleavage of host STAT6 leading to constitutive activation of the IL13/STAT6 signaling pathway to promote viral latency. Interacts with and modulates the histone methyltransferase MLL1 complex activity, leading to its recruitment on viral DNA terminal repeats changing the dynamic of histone H3 methylated 'Lys-4'(H3K4me) profile during the initial hours following infection. The sequence is that of Protein LANA1 (LANA1) from Homo sapiens (Human).